The chain runs to 881 residues: MNGVNDIRETFLGFFEKNGHARRPSAPLVPQNDPTLLFVNAGMVPFKNIFTGAEKPFAPRATTSQKCVRAGGKHNDLDNVGYTARHHTFFEMLGNFSFGDYFKDDAVALAWELVTKEYGLDAKRLLVTVYAEDEEAPAIWKKVAGLDDSRIIRIATSDNFWSMGDTGPCGPCSEIFFDHGDKVAGGPPGSPDEDGDRFIEIWNLVFMQFEQHEGGKRTNLPKPSIDTGMGLERVAAVLQGVHNNYDIDLFRALIAAEEEVYGQKASGDKTASFRVIADHLRTSAFLVADGILPSNEGRGYVLRRIMRRAMRHGHMLGAREPQMHRLVPALVAEMGKAYPELGRAQVAIEAAIEQEEARFQRTLGNGLSLLDKAASELSPGEALPGDVAFRLSDTFGFPLDLTQDILRGRGIEVDVDGFETALDAQRETSRAGGFSSGDQATEEIWFSVRDEKGPTKFTGYSSTAGEGRLIAIAAGGALIETVTAGPAELVFDATPFYAESGGQAGDHGEIVFEDGARFVVRDVQKRAGDLHVHIGELVSGSVKTGMKAQMSVNAARRKAVMANHSATHLMHAALRKVLGPHVTQKGSLVEADRFRFDFSHGAPVTAAQLEAIEDEVNAQIRANIETGIKVTTPDKAIEAGALALFGEKYGDEVRVLSMGDAGEGGRPYSVELCGGIHVSRSGDIAVFTILSEGGVSAGIRRIEGATGAEALAYLKGRAQIAADVAESLKVPLKDLPRRVASLTEERRTLERELSEAKRKLAMGGGGGAPAGPEVINGVNLIARVAEGVGGKELRALVDEAKSKIGSGVVVFVGVDGGKAGVAIGVTKDLTEKFSAVELVKAAAAAIGGQGGGGRPDMAQAGGPDGDKANEALEAVRAALKG.

Residues H564, H568, C673, and H677 each coordinate Zn(2+). The segment at 848–867 (GQGGGGRPDMAQAGGPDGDK) is disordered.

This sequence belongs to the class-II aminoacyl-tRNA synthetase family. It depends on Zn(2+) as a cofactor.

It is found in the cytoplasm. It catalyses the reaction tRNA(Ala) + L-alanine + ATP = L-alanyl-tRNA(Ala) + AMP + diphosphate. Functionally, catalyzes the attachment of alanine to tRNA(Ala) in a two-step reaction: alanine is first activated by ATP to form Ala-AMP and then transferred to the acceptor end of tRNA(Ala). Also edits incorrectly charged Ser-tRNA(Ala) and Gly-tRNA(Ala) via its editing domain. This chain is Alanine--tRNA ligase, found in Hyphomonas neptunium (strain ATCC 15444).